The primary structure comprises 31 residues: Cyclotide mech-5 (31 aa).

The segment at residues glycine 1 to aspartate 31 is a cross-link (cyclopeptide (Gly-Asp)). 3 cysteine pairs are disulfide-bonded: cysteine 5–cysteine 21, cysteine 9–cysteine 23, and cysteine 14–cysteine 28.

In terms of processing, this is a cyclic peptide. Contains 3 disulfide bonds.

Probably participates in a plant defense mechanism (Potential). Binds to and induces leakage in phospholipd membranes, particularly ones containing 1-palmitoyl-2-oleophosphatidylethanolamine (POPE). The polypeptide is Cyclotide mech-5 (Melicytus chathamicus (Chatham Island mahoe)).